Reading from the N-terminus, the 716-residue chain is Dynein axonemal intermediate chain 7 (716 aa).

The protein belongs to the DNAI7 family. Part of the multisubunit axonemal dynein complex formed at least of two heavy chains and a number of intermediate and light chains. Interacts with tubulin. Associates with microtubule. In terms of processing, ubiquitinated. Ubiquitination leads to its degradation through the 26S proteasome. Ubiquitin-proteasome-mediated DNAI7 degradation occurs in mitosis.

It is found in the cell projection. It localises to the cilium. The protein localises to the cytoplasm. Its function is as follows. Via its association with the multisubunit axonemal dynein complex, is potentially involved in the regulation of cilia function. May also act as a cell cycle regulator. This Homo sapiens (Human) protein is Dynein axonemal intermediate chain 7.